The primary structure comprises 352 residues: Ion-translocating oxidoreductase complex subunit D (352 aa).

The next 4 membrane-spanning stretches (helical) occupy residues 20-40 (IMLL…WFFG), 42-62 (GTLF…AIVL), 69-91 (VASH…SIPP), and 123-143 (PAMI…TSWL). Position 187 is an FMN phosphoryl threonine (T187). The next 5 helical transmembrane spans lie at 215–235 (LAGV…VFLL), 242–262 (WHIP…GWLF), 267–287 (LASP…FFIL), 301–321 (LIFG…GGYP), and 322–342 (DGVA…DYYT).

Belongs to the NqrB/RnfD family. The complex is composed of six subunits: RsxA, RsxB, RsxC, RsxD, RsxE and RsxG. Requires FMN as cofactor.

Its subcellular location is the cell inner membrane. Functionally, part of a membrane-bound complex that couples electron transfer with translocation of ions across the membrane. Required to maintain the reduced state of SoxR. The sequence is that of Ion-translocating oxidoreductase complex subunit D from Salmonella agona (strain SL483).